The chain runs to 264 residues: Probable membrane transporter protein HI_0902 (264 aa).

9 helical membrane passes run 4–24 (FILLCLLVGALAGFLAGLFGI), 28–48 (LVIVPTLVYLLPIVDVPESLL), 49–69 (MSTALGTSFATIVITGIGSAQ), 81–101 (AVRILAPVIMLSVFICGLFIG), 107–127 (ISAKIFACLVVYLATKMVLSI), 147–167 (ILIGMASSAAGIGGGGFIVPF), 183–203 (AFCGMLLGISGMFSFIVSGWG), 210–230 (YSLGYIYLPAVLGITATSFFT), and 243–263 (VSTLKKGFALFLIVVAINMFL).

This sequence belongs to the 4-toluene sulfonate uptake permease (TSUP) (TC 2.A.102) family.

Its subcellular location is the cell membrane. This chain is Probable membrane transporter protein HI_0902, found in Haemophilus influenzae (strain ATCC 51907 / DSM 11121 / KW20 / Rd).